We begin with the raw amino-acid sequence, 378 residues long: Alkaline elastase YaB (378 aa).

Positions 1 to 27 (MNKKMGKIVAGTALIISVAFSSSIAQA) are cleaved as a signal peptide. A propeptide spanning residues 28–110 (AEEAKEKYLI…IEEDAEVTTM (83 aa)) is cleaved from the precursor. Gln111 is a binding site for Ca(2+). In terms of domain architecture, Peptidase S8 spans 114 to 377 (PWGINRVQAP…SGLVNAEAAT (264 aa)). Residue Asp141 is the Charge relay system of the active site. Position 149 (Asp149) interacts with Ca(2+). The active-site Charge relay system is the His171. Leu182, Asn184, Ile186, Val188, Ala272, Tyr274, and Ala277 together coordinate Ca(2+). Ser324 acts as the Charge relay system in catalysis.

It belongs to the peptidase S8 family. The cofactor is Ca(2+).

It is found in the secreted. Digests elastin efficiently, has a substrate preference for Ala in P1 position. In Bacillus sp. (strain YaB), this protein is Alkaline elastase YaB (ale).